The primary structure comprises 73 residues: Large ribosomal subunit protein bL31 (73 aa).

Residues cysteine 16, cysteine 18, cysteine 37, and cysteine 40 each contribute to the Zn(2+) site.

This sequence belongs to the bacterial ribosomal protein bL31 family. Type A subfamily. Part of the 50S ribosomal subunit. Zn(2+) serves as cofactor.

In terms of biological role, binds the 23S rRNA. The protein is Large ribosomal subunit protein bL31 of Blochmanniella floridana.